The chain runs to 444 residues: Protein-serine O-palmitoleoyltransferase porcupine (444 aa).

Helical transmembrane passes span 29–49 (NGTLLTLLQMLVLVWMFFLVW), 81–101 (VMIFHTFSLISLFCAVQKLNG), 128–150 (FLTLRGVLMMHIMRLSTASFAIV), 163–183 (TLYLEYIYFPPFIIFGPYVTF), 201–221 (LGVFVQGSVLIFIGITLAIIS), 249–269 (YFICLSTQAFAMFLGSKIVVA), 304–324 (FFQSTALNVLLTFAVSALLHA), 326–346 (DYQMWLTLLALGFIAYSETVF), 383–403 (VLIINLFFMILSMYHLVFTGM), and 420–440 (WTIWGTHYYSSFIVSFAFLAL). Histidine 323 is an active-site residue.

Belongs to the membrane-bound acyltransferase family. Porcupine subfamily.

The protein localises to the membrane. It catalyses the reaction [Wnt protein]-L-serine + (9Z)-hexadecenoyl-CoA = [Wnt protein]-O-(9Z)-hexadecenoyl-L-serine + CoA. Key regulator of the Wnt signaling pathway that mediates lipid modification of Wnt proteins. Acts as a protein-serine O-palmitoleoyltransferase that catalyzes the attachment of palmitoleate, a 16-carbon monounsaturated fatty acid (C16:1(9Z)), to Wnt proteins. Serine palmitoleoylation of WNT proteins is required for efficient binding to frizzled receptors. Has a role in cell specification, specifically in blastomere signaling. Involved in cytosketetal polarity. Required for the orientation of mitotic spindle axis. The polypeptide is Protein-serine O-palmitoleoyltransferase porcupine (Caenorhabditis briggsae).